The primary structure comprises 81 residues: Small ribosomal subunit protein bS16 (81 aa).

The protein belongs to the bacterial ribosomal protein bS16 family.

This Clostridium beijerinckii (strain ATCC 51743 / NCIMB 8052) (Clostridium acetobutylicum) protein is Small ribosomal subunit protein bS16.